The following is a 108-amino-acid chain: uncharacterized protein (108 aa).

Phosphothreonine is present on threonine 56. Positions 89 to 108 (AQAKGTEQAEALKKGTSKWF) are disordered.

It is found in the cytoplasm. This is an uncharacterized protein from Schizosaccharomyces pombe (strain 972 / ATCC 24843) (Fission yeast).